A 206-amino-acid polypeptide reads, in one-letter code: uncharacterized protein (206 aa).

Its subcellular location is the plastid. It localises to the cyanelle. This is an uncharacterized protein from Cyanophora paradoxa.